The primary structure comprises 478 residues: ATP synthase subunit beta (478 aa).

164-171 (GGAGVGKT) contacts ATP.

The protein belongs to the ATPase alpha/beta chains family. In terms of assembly, F-type ATPases have 2 components, CF(1) - the catalytic core - and CF(0) - the membrane proton channel. CF(1) has five subunits: alpha(3), beta(3), gamma(1), delta(1), epsilon(1). CF(0) has three main subunits: a(1), b(2) and c(9-12). The alpha and beta chains form an alternating ring which encloses part of the gamma chain. CF(1) is attached to CF(0) by a central stalk formed by the gamma and epsilon chains, while a peripheral stalk is formed by the delta and b chains.

The protein localises to the cell membrane. It catalyses the reaction ATP + H2O + 4 H(+)(in) = ADP + phosphate + 5 H(+)(out). Its function is as follows. Produces ATP from ADP in the presence of a proton gradient across the membrane. The catalytic sites are hosted primarily by the beta subunits. The sequence is that of ATP synthase subunit beta from Streptomyces coelicolor (strain ATCC BAA-471 / A3(2) / M145).